The primary structure comprises 236 residues: Peptidase E (236 aa).

Residues Ser122, Asp137, and His159 each act as charge relay system in the active site.

It belongs to the peptidase S51 family.

It localises to the cytoplasm. The catalysed reaction is Dipeptidase E catalyzes the hydrolysis of dipeptides Asp-|-Xaa. It does not act on peptides with N-terminal Glu, Asn or Gln, nor does it cleave isoaspartyl peptides.. Its function is as follows. Hydrolyzes dipeptides containing N-terminal aspartate residues. May play a role in allowing the cell to use peptide aspartate to spare carbon otherwise required for the synthesis of the aspartate family of amino acids. This Shewanella oneidensis (strain ATCC 700550 / JCM 31522 / CIP 106686 / LMG 19005 / NCIMB 14063 / MR-1) protein is Peptidase E.